We begin with the raw amino-acid sequence, 665 residues long: mRNA cleavage and polyadenylation factor CLP1 (665 aa).

ATP contacts are provided by residues Lys-91 and 195-200 (SAGKTS). 2 disordered regions span residues 218-283 (VKEG…SQAK) and 593-615 (PPPR…HDYE). 2 stretches are compositionally biased toward basic and acidic residues: residues 219–238 (KEGD…EIHP) and 598–614 (QSKD…HHDY).

It belongs to the Clp1 family. Clp1 subfamily. As to quaternary structure, component of a pre-mRNA cleavage factor complex. Interacts directly with PCF11.

Its subcellular location is the nucleus. Its function is as follows. Required for endonucleolytic cleavage during polyadenylation-dependent pre-mRNA 3'-end formation. In Malassezia globosa (strain ATCC MYA-4612 / CBS 7966) (Dandruff-associated fungus), this protein is mRNA cleavage and polyadenylation factor CLP1.